A 472-amino-acid polypeptide reads, in one-letter code: UDP-N-acetylmuramate--L-alanine ligase (472 aa).

121-127 is a binding site for ATP; the sequence is GTHGKTT.

The protein belongs to the MurCDEF family.

It localises to the cytoplasm. The enzyme catalyses UDP-N-acetyl-alpha-D-muramate + L-alanine + ATP = UDP-N-acetyl-alpha-D-muramoyl-L-alanine + ADP + phosphate + H(+). It participates in cell wall biogenesis; peptidoglycan biosynthesis. Functionally, cell wall formation. The sequence is that of UDP-N-acetylmuramate--L-alanine ligase from Hahella chejuensis (strain KCTC 2396).